A 183-amino-acid chain; its full sequence is Alkyl hydroperoxide reductase AhpD (183 aa).

The active-site Proton donor is Cys132. Cysteines 132 and 135 form a disulfide. The active-site Cysteine sulfenic acid (-SOH) intermediate is Cys135.

The protein belongs to the AhpD family.

It carries out the reaction N(6)-[(R)-dihydrolipoyl]-L-lysyl-[lipoyl-carrier protein] + a hydroperoxide = N(6)-[(R)-lipoyl]-L-lysyl-[lipoyl-carrier protein] + an alcohol + H2O. Functionally, antioxidant protein with alkyl hydroperoxidase activity. Required for the reduction of the AhpC active site cysteine residues and for the regeneration of the AhpC enzyme activity. This Caulobacter vibrioides (strain ATCC 19089 / CIP 103742 / CB 15) (Caulobacter crescentus) protein is Alkyl hydroperoxide reductase AhpD.